A 469-amino-acid polypeptide reads, in one-letter code: ATP synthase subunit beta (469 aa).

155 to 162 (GGAGVGKT) is a binding site for ATP.

The protein belongs to the ATPase alpha/beta chains family. In terms of assembly, F-type ATPases have 2 components, CF(1) - the catalytic core - and CF(0) - the membrane proton channel. CF(1) has five subunits: alpha(3), beta(3), gamma(1), delta(1), epsilon(1). CF(0) has three main subunits: a(1), b(2) and c(9-12). The alpha and beta chains form an alternating ring which encloses part of the gamma chain. CF(1) is attached to CF(0) by a central stalk formed by the gamma and epsilon chains, while a peripheral stalk is formed by the delta and b chains.

The protein resides in the cell inner membrane. The enzyme catalyses ATP + H2O + 4 H(+)(in) = ADP + phosphate + 5 H(+)(out). Its function is as follows. Produces ATP from ADP in the presence of a proton gradient across the membrane. The catalytic sites are hosted primarily by the beta subunits. In Syntrophobacter fumaroxidans (strain DSM 10017 / MPOB), this protein is ATP synthase subunit beta.